Reading from the N-terminus, the 61-residue chain is uncharacterized protein (61 aa).

This is an uncharacterized protein from Methanocaldococcus jannaschii (strain ATCC 43067 / DSM 2661 / JAL-1 / JCM 10045 / NBRC 100440) (Methanococcus jannaschii).